Consider the following 352-residue polypeptide: Forkhead box protein D5 (352 aa).

2 disordered regions span residues 1–32 (MSLSQESGAHHDPQDYPVVSDEEDEIDILGED) and 47–92 (HSEM…GKAK). Positions 20-32 (SDEEDEIDILGED) are enriched in acidic residues. Over residues 73–82 (ESEGGTSKDS) the composition is skewed to low complexity. The fork-head DNA-binding region spans 97–191 (KPPYSYIALI…DNGSFLRRRK (95 aa)).

Expression begins in the newly forming dorsal mesoderm and is maintained during gastrulation at the dorsal blastopore lip (Spemann organizer). At the early neurula stages, expressed in a row of cells along the dorsal midline that are destined to become the fllor plate of the neural tube. At late neurula, expressed within the anterior and posterior poles of the embryo. After neural closure, expression is detected only in the tailtip, the otic vesicle and at the midbrain/hindbrain boundary.

The protein resides in the nucleus. Its function is as follows. Transcriptional repressor. The protein is Forkhead box protein D5 of Xenopus tropicalis (Western clawed frog).